The following is a 386-amino-acid chain: Succinate--CoA ligase [ADP-forming] subunit beta (386 aa).

Positions 9–244 (KELLRKYGVV…FDEEDADEIE (236 aa)) constitute an ATP-grasp domain. ATP is bound by residues K46, 53–55 (GRG), E99, A102, and E107. Positions 199 and 213 each coordinate Mg(2+). Substrate is bound by residues N264 and 321–323 (GIM).

The protein belongs to the succinate/malate CoA ligase beta subunit family. In terms of assembly, heterotetramer of two alpha and two beta subunits. Mg(2+) serves as cofactor.

The enzyme catalyses succinate + ATP + CoA = succinyl-CoA + ADP + phosphate. It carries out the reaction GTP + succinate + CoA = succinyl-CoA + GDP + phosphate. It functions in the pathway carbohydrate metabolism; tricarboxylic acid cycle; succinate from succinyl-CoA (ligase route): step 1/1. Succinyl-CoA synthetase functions in the citric acid cycle (TCA), coupling the hydrolysis of succinyl-CoA to the synthesis of either ATP or GTP and thus represents the only step of substrate-level phosphorylation in the TCA. The beta subunit provides nucleotide specificity of the enzyme and binds the substrate succinate, while the binding sites for coenzyme A and phosphate are found in the alpha subunit. This Aromatoleum aromaticum (strain DSM 19018 / LMG 30748 / EbN1) (Azoarcus sp. (strain EbN1)) protein is Succinate--CoA ligase [ADP-forming] subunit beta.